The primary structure comprises 462 residues: Jasmonoyl--L-amino acid synthetase GH3.3 (462 aa).

Position 103 (S103) interacts with ATP. Residue S106 coordinates jasmonate. Residues T126, N172, and G337–W342 contribute to the ATP site. Position 170–174 (T170–Y174) interacts with an L-alpha-amino acid. Jasmonate-binding positions include A334 to G337 and S339.

Belongs to the IAA-amido conjugating enzyme family. In terms of tissue distribution, expressed in green shoots and flowers.

The catalysed reaction is a jasmonate + an L-alpha-amino acid + ATP = a jasmonyl-L-amino acid + AMP + diphosphate + H(+). Functionally, catalyzes the synthesis of jasmonate-amino acid conjugates by adenylation. Catalyzes the conjugation of jasmonate (JA) to Ile when expressed in a heterologous system (E.coli). Catalyzes in vitro the conjugation of jasmonate (JA) to Ile, Phe, Leu, Met, Val and Trp. May catalyze the synthesis of indole-3-acetic acid (IAA)-amino acid conjugates, providing a mechanism for the plant to cope with the presence of excess auxin. This Oryza sativa subsp. japonica (Rice) protein is Jasmonoyl--L-amino acid synthetase GH3.3.